The chain runs to 252 residues: Small capsomere-interacting protein (252 aa).

The segment at 69–252 (NKKRSGGPEK…APRGKLGKGR (184 aa)) is disordered. Low complexity predominate over residues 83–93 (ANPGAGPQNAP). Residues 94 to 109 (GCGGGGSGSGGSGPPG) are compositionally biased toward gly residues. Over residues 182–192 (PPAPPPLPQVP) the composition is skewed to pro residues. Over residues 213–237 (LPQQLGTAGSDNSGGQASSPGSQNP) the composition is skewed to polar residues.

It belongs to the herpesviridae small capsomere-interacting protein family. Interacts with the major capsid protein/MCP.

The protein resides in the virion. It localises to the host nucleus. Participates in the assembly of the infectious particles by decorating the outer surface of the capsid shell and thus forming a layer between the capsid and the tegument. Complexes composed of the major capsid protein and small capsomere-interacting protein/SCP assemble together in the host cytoplasm and are translocated to the nucleus, where they accumulate and participate in capsid assembly. The protein is Small capsomere-interacting protein of Connochaetes taurinus (Blue wildebeest).